The chain runs to 66 residues: UPF0434 protein Nwi_0075 (66 aa).

It belongs to the UPF0434 family.

This is UPF0434 protein Nwi_0075 from Nitrobacter winogradskyi (strain ATCC 25391 / DSM 10237 / CIP 104748 / NCIMB 11846 / Nb-255).